A 325-amino-acid chain; its full sequence is Germination protease (325 aa).

Positions Met-1–Asp-7 are excised as a propeptide.

Belongs to the peptidase A25 family. As to quaternary structure, homotetramer. In terms of processing, autoproteolytically processed. The inactive tetrameric zymogen termed p46 autoprocesses to a smaller form termed p41, which is active only during spore germination.

It catalyses the reaction Endopeptidase action with P4 Glu or Asp, P1 preferably Glu &gt; Asp, P1' hydrophobic and P2' Ala.. Functionally, initiates the rapid degradation of small, acid-soluble proteins during spore germination. This is Germination protease from Clostridium perfringens (strain 13 / Type A).